Here is a 186-residue protein sequence, read N- to C-terminus: dCTP deaminase, dUMP-forming (186 aa).

DCTP contacts are provided by residues lysine 99 to arginine 104, aspartate 117, threonine 125 to glutamate 127, glutamine 146, tyrosine 159, lysine 166, and glutamine 170. Glutamate 127 (proton donor/acceptor) is an active-site residue.

Belongs to the dCTP deaminase family. Homotrimer.

The catalysed reaction is dCTP + 2 H2O = dUMP + NH4(+) + diphosphate. It functions in the pathway pyrimidine metabolism; dUMP biosynthesis; dUMP from dCTP: step 1/1. Its function is as follows. Bifunctional enzyme that catalyzes both the deamination of dCTP to dUTP and the hydrolysis of dUTP to dUMP without releasing the toxic dUTP intermediate. This is dCTP deaminase, dUMP-forming from Methanosphaerula palustris (strain ATCC BAA-1556 / DSM 19958 / E1-9c).